The sequence spans 463 residues: Retinoic acid receptor RXR-gamma (463 aa).

The interval 1 to 138 is modulating; that stretch reads MYGNYSHFMK…TSPGSLVKHI (138 aa). Residues 17-53 form a disordered region; the sequence is GSPGHSGSTSMSPSAALSTGKPMDSHPSYTDTPVSAP. Positions 21–33 are enriched in polar residues; the sequence is HSGSTSMSPSAAL. 2 consecutive NR C4-type zinc fingers follow at residues 139–159 and 175–199; these read CAICGDRSSGKHYGVYSCEGC and CRDNKDCLIDKRQRNRCQYCRYQKC. A DNA-binding region (nuclear receptor) is located at residues 139–204; the sequence is CAICGDRSSG…RYQKCLVMGM (66 aa). Residues 205 to 230 form a hinge region; that stretch reads KREAVQEERQRSRERAESEAECASSG. Positions 211 to 222 are enriched in basic and acidic residues; the sequence is EERQRSRERAES. Residues 211-232 are disordered; it reads EERQRSRERAESEAECASSGHE. One can recognise an NR LBD domain in the interval 231 to 459; it reads HEDMPVERIL…TFLMEMLETP (229 aa).

It belongs to the nuclear hormone receptor family. NR2 subfamily. Homodimer. Heterodimer with a RAR molecule. Binds DNA preferentially as a RAR/RXR heterodimer. Interacts with RARA. In terms of processing, acetylated by EP300.

It localises to the nucleus. It is found in the cytoplasm. Functionally, receptor for retinoic acid. Retinoic acid receptors bind as heterodimers to their target response elements in response to their ligands, all-trans or 9-cis retinoic acid, and regulate gene expression in various biological processes. The RAR/RXR heterodimers bind to the retinoic acid response elements (RARE) composed of tandem 5'-AGGTCA-3' sites known as DR1-DR5. The high affinity ligand for RXRs is 9-cis retinoic acid. In Sus scrofa (Pig), this protein is Retinoic acid receptor RXR-gamma (RXRG).